We begin with the raw amino-acid sequence, 267 residues long: 3-deoxy-manno-octulosonate cytidylyltransferase (267 aa).

Belongs to the KdsB family.

The protein localises to the cytoplasm. The enzyme catalyses 3-deoxy-alpha-D-manno-oct-2-ulosonate + CTP = CMP-3-deoxy-beta-D-manno-octulosonate + diphosphate. Its pathway is nucleotide-sugar biosynthesis; CMP-3-deoxy-D-manno-octulosonate biosynthesis; CMP-3-deoxy-D-manno-octulosonate from 3-deoxy-D-manno-octulosonate and CTP: step 1/1. It participates in bacterial outer membrane biogenesis; lipopolysaccharide biosynthesis. Functionally, activates KDO (a required 8-carbon sugar) for incorporation into bacterial lipopolysaccharide in Gram-negative bacteria. This chain is 3-deoxy-manno-octulosonate cytidylyltransferase, found in Paraburkholderia phymatum (strain DSM 17167 / CIP 108236 / LMG 21445 / STM815) (Burkholderia phymatum).